A 222-amino-acid chain; its full sequence is LexA repressor (222 aa).

The H-T-H motif DNA-binding region spans 28–48 (IREIGEHMDIRSTNGVNDHLK). Active-site for autocatalytic cleavage activity residues include Ser-135 and Lys-172.

This sequence belongs to the peptidase S24 family. Homodimer.

It carries out the reaction Hydrolysis of Ala-|-Gly bond in repressor LexA.. Its function is as follows. Represses a number of genes involved in the response to DNA damage (SOS response), including recA and lexA. In the presence of single-stranded DNA, RecA interacts with LexA causing an autocatalytic cleavage which disrupts the DNA-binding part of LexA, leading to derepression of the SOS regulon and eventually DNA repair. The polypeptide is LexA repressor (Myxococcus xanthus (strain DK1622)).